Consider the following 61-residue polypeptide: Large ribosomal subunit protein bL32 (61 aa).

The tract at residues 1-44 (MAVQQNRKSRSRRDMRRSHDALTENALTVDQTTGETHRRHHVTK) is disordered. The span at 7 to 16 (RKSRSRRDMR) shows a compositional bias: basic residues. Polar residues predominate over residues 25–34 (NALTVDQTTG).

This sequence belongs to the bacterial ribosomal protein bL32 family.

The polypeptide is Large ribosomal subunit protein bL32 (Acinetobacter baylyi (strain ATCC 33305 / BD413 / ADP1)).